The sequence spans 445 residues: Phosphoglucosamine mutase (445 aa).

S102 acts as the Phosphoserine intermediate in catalysis. Residues S102, D241, D243, and D245 each coordinate Mg(2+). At S102 the chain carries Phosphoserine.

The protein belongs to the phosphohexose mutase family. Mg(2+) is required as a cofactor. Activated by phosphorylation.

The catalysed reaction is alpha-D-glucosamine 1-phosphate = D-glucosamine 6-phosphate. In terms of biological role, catalyzes the conversion of glucosamine-6-phosphate to glucosamine-1-phosphate. The sequence is that of Phosphoglucosamine mutase from Salmonella dublin (strain CT_02021853).